The chain runs to 208 residues: Protein GrpE (208 aa).

Basic and acidic residues predominate over residues 1–25 (MVDNKDFNEELKESIQEELDNETKS). Positions 1–38 (MVDNKDFNEELKESIQEELDNETKSENPNIDEEVEEVS) are disordered. The span at 29-38 (NIDEEVEEVS) shows a compositional bias: acidic residues.

This sequence belongs to the GrpE family. In terms of assembly, homodimer.

It is found in the cytoplasm. Participates actively in the response to hyperosmotic and heat shock by preventing the aggregation of stress-denatured proteins, in association with DnaK and GrpE. It is the nucleotide exchange factor for DnaK and may function as a thermosensor. Unfolded proteins bind initially to DnaJ; upon interaction with the DnaJ-bound protein, DnaK hydrolyzes its bound ATP, resulting in the formation of a stable complex. GrpE releases ADP from DnaK; ATP binding to DnaK triggers the release of the substrate protein, thus completing the reaction cycle. Several rounds of ATP-dependent interactions between DnaJ, DnaK and GrpE are required for fully efficient folding. In Clostridium perfringens (strain SM101 / Type A), this protein is Protein GrpE.